The chain runs to 686 residues: Proprotein convertase subtilisin/kexin type 9 (686 aa).

Positions 1 to 28 (MGTVSSRRLWWPLPLLLLLLLGPAGTRA) are cleaved as a signal peptide. Positions 29 to 150 (QEDDDDDYEE…IEEDSSVFAQ (122 aa)) are excised as a propeptide. A Sulfotyrosine modification is found at Tyr36. Ser45 carries the post-translational modification Phosphoserine. Residues 75-147 (TYVVVLKEET…VDYIEEDSSV (73 aa)) form the Inhibitor I9 domain. Residues 153–459 (PWNLERITPA…GWQLFCRTVW (307 aa)) enclose the Peptidase S8 domain. Residues Asp184 and His224 each act as charge relay system in the active site. Cystine bridges form between Cys221–Cys253 and Cys321–Cys356. Ser384 acts as the Charge relay system in catalysis. The tract at residues 448-686 (GEGWQLFCRT…CRSQHLAQAS (239 aa)) is C-terminal domain. Cystine bridges form between Cys455–Cys525, Cys475–Cys524, and Cys484–Cys507. Residue Asn531 is glycosylated (N-linked (GlcNAc...) asparagine). 6 disulfide bridges follow: Cys532/Cys599, Cys550/Cys598, Cys560/Cys586, Cys606/Cys677, Cys624/Cys676, and Cys633/Cys652. Ser686 carries the phosphoserine modification.

Belongs to the peptidase S8 family. As to quaternary structure, monomer. Can self-associate to form dimers and higher multimers which may have increased LDLR degrading activity. The precursor protein but not the mature protein may form multimers. Interacts with APOB, VLDLR, LRP8/APOER2 and BACE1. The full-length immature form (pro-PCSK9) interacts with SCNN1A, SCNN1B and SCNN1G. The pro-PCSK9 form (via C-terminal domain) interacts with LDLR. Interacts (via the C-terminal domain) with ANXA2 (via repeat Annexin 1); the interaction inhibits the degradation of LDLR. Requires Ca(2+) as cofactor. Post-translationally, cleavage by furin and PCSK5 generates a truncated inactive protein that is unable to induce LDLR degradation. Undergoes autocatalytic cleavage in the endoplasmic reticulum to release the propeptide from the N-terminus and the cleavage of the propeptide is strictly required for its maturation and activation. The cleaved propeptide however remains associated with the catalytic domain through non-covalent interactions, preventing potential substrates from accessing its active site. As a result, it is secreted from cells as a propeptide-containing, enzymatically inactive protein. In terms of processing, phosphorylation protects the propeptide against proteolysis.

Its subcellular location is the cytoplasm. It is found in the secreted. It localises to the endosome. The protein localises to the lysosome. The protein resides in the cell surface. Its subcellular location is the endoplasmic reticulum. It is found in the golgi apparatus. With respect to regulation, its proteolytic activity is autoinhibited by the non-covalent binding of the propeptide to the catalytic domain. Inhibited by EGTA. Functionally, crucial player in the regulation of plasma cholesterol homeostasis. Binds to low-density lipid receptor family members: low density lipoprotein receptor (LDLR), very low density lipoprotein receptor (VLDLR), apolipoprotein E receptor (LRP1/APOER) and apolipoprotein receptor 2 (LRP8/APOER2), and promotes their degradation in intracellular acidic compartments. Acts via a non-proteolytic mechanism to enhance the degradation of the hepatic LDLR through a clathrin LDLRAP1/ARH-mediated pathway. May prevent the recycling of LDLR from endosomes to the cell surface or direct it to lysosomes for degradation. Can induce ubiquitination of LDLR leading to its subsequent degradation. Inhibits intracellular degradation of APOB via the autophagosome/lysosome pathway in a LDLR-independent manner. Involved in the disposal of non-acetylated intermediates of BACE1 in the early secretory pathway. Inhibits epithelial Na(+) channel (ENaC)-mediated Na(+) absorption by reducing ENaC surface expression primarily by increasing its proteasomal degradation. Regulates neuronal apoptosis via modulation of LRP8/APOER2 levels and related anti-apoptotic signaling pathways. The protein is Proprotein convertase subtilisin/kexin type 9 (PCSK9) of Saguinus labiatus (Red-chested mustached tamarin).